A 733-amino-acid chain; its full sequence is LMBR1 domain-containing protein 2 homolog A (733 aa).

5 helical membrane-spanning segments follow: residues 1 to 21 (MIVIFIFILIAVGLLSTKILH), 33 to 53 (VYISVWIGWFMCFSIVILVPI), 125 to 145 (FYFGTLLLTWLVYPLMGSFVL), 163 to 183 (AYLYLIFGVIGLVVMIWLLAV), and 191 to 211 (MVGFAMAAANTWGLCLVIILM). Positions 232–266 (LKHLQFKAVELLNSKKKANEELIATMKVIRRIQEK) form a coiled coil. Helical transmembrane passes span 386–406 (AAIVFAVLSLLIIWSEFALAF), 423–443 (VSNIFVQFILFFPLGYEALTC), 468–488 (SIIFSAAYLCRLGAPLCYNFI), and 513–533 (VAPFLGTYFYIYFPLLIVIVC). 3 disordered regions span residues 581 to 641 (NNIK…TSSA), 649 to 668 (LKKSSNNNNNNNNNNNPYEQ), and 674 to 696 (ESNDFDDDDDIESGGAGRPTYNA). The span at 596–619 (DSTSNNPKQIFKSGSTTISKQSPP) shows a compositional bias: polar residues. Composition is skewed to low complexity over residues 620–640 (NLNVSGGNINNNNTNNGNTSS) and 654–664 (NNNNNNNNNNN). The segment covering 674 to 685 (ESNDFDDDDDIE) has biased composition (acidic residues).

It belongs to the LIMR family.

It localises to the membrane. The sequence is that of LMBR1 domain-containing protein 2 homolog A from Dictyostelium discoideum (Social amoeba).